Consider the following 425-residue polypeptide: Adenylosuccinate synthetase (425 aa).

GTP is bound by residues 12 to 18 (GDEGKGK) and 40 to 42 (GHT). Residue Asp13 is the Proton acceptor of the active site. Mg(2+)-binding residues include Asp13 and Gly40. IMP contacts are provided by residues 13–16 (DEGK), 38–41 (NAGH), Thr127, Arg141, Gln222, Thr237, and Arg301. His41 (proton donor) is an active-site residue. Residue 297–303 (AVTGRPR) participates in substrate binding. Residues Arg303, 329 to 331 (KID), and 411 to 413 (SVG) contribute to the GTP site.

The protein belongs to the adenylosuccinate synthetase family. As to quaternary structure, homodimer. It depends on Mg(2+) as a cofactor.

The protein resides in the cytoplasm. The catalysed reaction is IMP + L-aspartate + GTP = N(6)-(1,2-dicarboxyethyl)-AMP + GDP + phosphate + 2 H(+). Its pathway is purine metabolism; AMP biosynthesis via de novo pathway; AMP from IMP: step 1/2. Plays an important role in the de novo pathway of purine nucleotide biosynthesis. Catalyzes the first committed step in the biosynthesis of AMP from IMP. The sequence is that of Adenylosuccinate synthetase from Fusobacterium nucleatum.